The sequence spans 394 residues: Acetate kinase 1 (394 aa).

A Mg(2+)-binding site is contributed by asparagine 8. ATP is bound at residue lysine 15. Arginine 90 provides a ligand contact to substrate. Aspartate 147 acts as the Proton donor/acceptor in catalysis. ATP is bound by residues 207–211 (HLGSG) and 282–284 (DMR). Glutamate 382 is a binding site for Mg(2+).

This sequence belongs to the acetokinase family. Homodimer. The cofactor is Mg(2+). Requires Mn(2+) as cofactor.

The protein localises to the cytoplasm. The catalysed reaction is acetate + ATP = acetyl phosphate + ADP. It functions in the pathway metabolic intermediate biosynthesis; acetyl-CoA biosynthesis; acetyl-CoA from acetate: step 1/2. Catalyzes the formation of acetyl phosphate from acetate and ATP. Can also catalyze the reverse reaction. The polypeptide is Acetate kinase 1 (Latilactobacillus sakei subsp. sakei (strain 23K) (Lactobacillus sakei subsp. sakei)).